The sequence spans 64 residues: Large ribosomal subunit protein bL35c (64 aa).

Belongs to the bacterial ribosomal protein bL35 family.

Its subcellular location is the plastid. The protein resides in the chloroplast. This Cyanidium caldarium (Red alga) protein is Large ribosomal subunit protein bL35c.